Reading from the N-terminus, the 84-residue chain is Toxin To7 (84 aa).

The first 20 residues, 1-20 (MSIFPIVLALLLIGLEETEA), serve as a signal peptide directing secretion. One can recognise an LCN-type CS-alpha/beta domain in the interval 21-83 (LDGYPLSKIN…KMYPGSSPCY (63 aa)). 4 cysteine pairs are disulfide-bonded: Cys-32/Cys-82, Cys-36/Cys-59, Cys-42/Cys-64, and Cys-46/Cys-66.

Expressed by the venom gland.

It is found in the secreted. In terms of biological role, inhibits voltage-gated sodium channels (Nav). The chain is Toxin To7 from Tityus obscurus (Amazonian scorpion).